The following is a 193-amino-acid chain: Xanthine phosphoribosyltransferase (193 aa).

Xanthine is bound by residues L20 and N27. 128–132 is a binding site for 5-phospho-alpha-D-ribose 1-diphosphate; sequence ANGEA. K156 is a binding site for xanthine.

This sequence belongs to the purine/pyrimidine phosphoribosyltransferase family. Xpt subfamily. As to quaternary structure, homodimer.

The protein resides in the cytoplasm. It catalyses the reaction XMP + diphosphate = xanthine + 5-phospho-alpha-D-ribose 1-diphosphate. It functions in the pathway purine metabolism; XMP biosynthesis via salvage pathway; XMP from xanthine: step 1/1. Its function is as follows. Converts the preformed base xanthine, a product of nucleic acid breakdown, to xanthosine 5'-monophosphate (XMP), so it can be reused for RNA or DNA synthesis. The protein is Xanthine phosphoribosyltransferase of Exiguobacterium sp. (strain ATCC BAA-1283 / AT1b).